A 404-amino-acid polypeptide reads, in one-letter code: Intracellular hyaluronan-binding protein 4.L (404 aa).

Disordered regions lie at residues Met-1–Asn-21, Leu-51–Ser-288, and Leu-359–Ala-379. Polar residues predominate over residues Glu-8–Gln-19. 3 stretches are compositionally biased toward basic and acidic residues: residues Gly-71–Ala-81, Lys-145–Arg-159, and Arg-165–Met-184. Residues Gly-188 to Gly-200 are compositionally biased toward gly residues. Composition is skewed to basic and acidic residues over residues Thr-205–Gly-233 and Glu-270–Glu-281.

Belongs to the SERBP1-HABP4 family. Associates with ribosomes; promoting ribosome stabilization. Interacts with eef2/eEF2; promoting ribosome stabilization.

The protein resides in the nucleus. It localises to the cytoplasm. The protein localises to the stress granule. Its subcellular location is the nucleolus. It is found in the nucleus speckle. The protein resides in the cajal body. Its function is as follows. Ribosome-binding protein that promotes ribosome hibernation, a process during which ribosomes are stabilized in an inactive state and preserved from proteasomal degradation. Acts via its association with eef2/eEF2 factor at the A-site of the ribosome, promoting ribosome stabilization in an inactive state compatible with storage. Plays a key role in ribosome hibernation in the mature egg by promoting ribosome stabilization. Ribosomes, which are produced in large quantities during oogenesis, are stored and translationally repressed in the egg and early embryo. This Xenopus laevis (African clawed frog) protein is Intracellular hyaluronan-binding protein 4.L.